Consider the following 296-residue polypeptide: Lipoyl synthase (296 aa).

Residues C34, C39, C45, C60, C64, C67, and S276 each coordinate [4Fe-4S] cluster. Residues 46–265 enclose the Radical SAM core domain; it reads WGEGTATFMI…GEVALSMGFK (220 aa).

This sequence belongs to the radical SAM superfamily. Lipoyl synthase family. [4Fe-4S] cluster is required as a cofactor.

It is found in the cytoplasm. It catalyses the reaction [[Fe-S] cluster scaffold protein carrying a second [4Fe-4S](2+) cluster] + N(6)-octanoyl-L-lysyl-[protein] + 2 oxidized [2Fe-2S]-[ferredoxin] + 2 S-adenosyl-L-methionine + 4 H(+) = [[Fe-S] cluster scaffold protein] + N(6)-[(R)-dihydrolipoyl]-L-lysyl-[protein] + 4 Fe(3+) + 2 hydrogen sulfide + 2 5'-deoxyadenosine + 2 L-methionine + 2 reduced [2Fe-2S]-[ferredoxin]. It participates in protein modification; protein lipoylation via endogenous pathway; protein N(6)-(lipoyl)lysine from octanoyl-[acyl-carrier-protein]: step 2/2. Its function is as follows. Catalyzes the radical-mediated insertion of two sulfur atoms into the C-6 and C-8 positions of the octanoyl moiety bound to the lipoyl domains of lipoate-dependent enzymes, thereby converting the octanoylated domains into lipoylated derivatives. In Pyrobaculum arsenaticum (strain DSM 13514 / JCM 11321 / PZ6), this protein is Lipoyl synthase.